A 77-amino-acid polypeptide reads, in one-letter code: uncharacterized protein (77 aa).

A helical transmembrane segment spans residues 13-33 (VPVIRLSVFLHFFFVFPFCLL).

The protein localises to the membrane. This is an uncharacterized protein from Saccharomyces cerevisiae (strain ATCC 204508 / S288c) (Baker's yeast).